Consider the following 274-residue polypeptide: MAIVKCKPTSPGRRHVVKVVNADLHKGKPYAPLLEKNSKNGGRNNNGRITVRHIGGGHKHHYRVIDFKRTKDGIPATVERLEYDPNRSANIALVLYKDGERRYILAPKGVVAGDVIQSGVDAPIKAGNTLPMRNIPVGSTVHNVELKPGKGGQLARSAGAYAQIVARDGAYVTIRLRSGEMRKVLSEGRATIGEVGNSEHMLRELGKAGASRWRGVRPTVRGVVMNPVDHPHGGGEGRTSGGRHPVSPWGMPTKGFKTRKNKRTDKYIVRRRNK.

A disordered region spans residues 223–265 (VVMNPVDHPHGGGEGRTSGGRHPVSPWGMPTKGFKTRKNKRTD). The segment covering 256–265 (FKTRKNKRTD) has biased composition (basic residues).

This sequence belongs to the universal ribosomal protein uL2 family. As to quaternary structure, part of the 50S ribosomal subunit. Forms a bridge to the 30S subunit in the 70S ribosome.

Its function is as follows. One of the primary rRNA binding proteins. Required for association of the 30S and 50S subunits to form the 70S ribosome, for tRNA binding and peptide bond formation. It has been suggested to have peptidyltransferase activity; this is somewhat controversial. Makes several contacts with the 16S rRNA in the 70S ribosome. This chain is Large ribosomal subunit protein uL2, found in Vibrio parahaemolyticus serotype O3:K6 (strain RIMD 2210633).